The chain runs to 571 residues: MRTSKYLLSTLKETPNDAQVVSHQLMLRAGMIRPLASGLYNWLPTGLRVLKKVENIVREEMNKSGAIEVEMPVVQPAELWQESQRWEQYGPELLRFVDRGNRDFVLGPTHEEVITDLVHREVSSYKQLPLNLYQIQTKFRDEVRPRFGVMRGREFLMKDAYSFHTSKECLQNTYDVMYRTYNNIFTRLGLDFRAVQADTGSIGGSASHEFQVLAKSGEDDIVFSSNSDYAANIELAEAVAIGQRQAPSATMELVDTPNAKTINDLVEQFNLSVEKTVKTLIVKGANEDQPLIALIVRGDHELNEVKAQKLPEVADPLEFANEDEIKTKIGAGIGSLGPVNLPIPAIIDRSVALMSDFSTGANIDGKHYFNVNWDRDVALPKVADLRNVVEGDPSPDGKGTLQIKRGIEVGHIFQLGTKYSEAMKATVQGEDGRPQTMIMGCYGIGVSRVVAATIEQCHDEKGIIWSSDEIAPFTVAIIPMNMYKSKNVQIFAEELYQSLLNKNVDVIFDDRKERPGVMFADIELIGVPHMIVIGEKNLEKGEIEYKNRRTGEKQIIAKEQVLDFLAQRVNA.

It belongs to the class-II aminoacyl-tRNA synthetase family. ProS type 1 subfamily. In terms of assembly, homodimer.

It localises to the cytoplasm. It catalyses the reaction tRNA(Pro) + L-proline + ATP = L-prolyl-tRNA(Pro) + AMP + diphosphate. Functionally, catalyzes the attachment of proline to tRNA(Pro) in a two-step reaction: proline is first activated by ATP to form Pro-AMP and then transferred to the acceptor end of tRNA(Pro). As ProRS can inadvertently accommodate and process non-cognate amino acids such as alanine and cysteine, to avoid such errors it has two additional distinct editing activities against alanine. One activity is designated as 'pretransfer' editing and involves the tRNA(Pro)-independent hydrolysis of activated Ala-AMP. The other activity is designated 'posttransfer' editing and involves deacylation of mischarged Ala-tRNA(Pro). The misacylated Cys-tRNA(Pro) is not edited by ProRS. The polypeptide is Proline--tRNA ligase (Histophilus somni (strain 2336) (Haemophilus somnus)).